Here is a 227-residue protein sequence, read N- to C-terminus: Lipoprotein-releasing system ATP-binding protein LolD (227 aa).

The 221-residue stretch at leucine 7 to alanine 227 folds into the ABC transporter domain. Glycine 43–serine 50 contributes to the ATP binding site.

The protein belongs to the ABC transporter superfamily. Lipoprotein translocase (TC 3.A.1.125) family. The complex is composed of two ATP-binding proteins (LolD) and two transmembrane proteins (LolC and LolE).

Its subcellular location is the cell inner membrane. Its function is as follows. Part of the ABC transporter complex LolCDE involved in the translocation of mature outer membrane-directed lipoproteins, from the inner membrane to the periplasmic chaperone, LolA. Responsible for the formation of the LolA-lipoprotein complex in an ATP-dependent manner. This is Lipoprotein-releasing system ATP-binding protein LolD from Pseudomonas syringae pv. tomato (strain ATCC BAA-871 / DC3000).